The sequence spans 553 residues: Undecaprenyl phosphate-alpha-4-amino-4-deoxy-L-arabinose arabinosyl transferase 2 (553 aa).

The next 12 helical transmembrane spans lie at 6–26 (ASKIGAILLALFFVLTYLFPL), 85–105 (FAVRFGSVISILLSALLIYLL), 115–135 (VAFVASLIYLSMFLVFSVGTY), 137–157 (VLDPMLALWVTASMVCCFWAL), 178–198 (MAFMTKGFLALAIPVIVMIPV), 208–228 (MLLYGVLAVLSAALISLPWVL), 261–281 (FWYYIPIILLGVIPWLGLLPG), 295–315 (ELFFLLCWFVVPFLFFSIAKG), 317–337 (LPTYMLPFMGPLAMLMAKYGV), 352–372 (GYINIFIGVAAVVAILIIQLV), 386–406 (WVLAIVAFSLWGIIGYLCSTL), and 410–430 (HWLWAASCSLGVSLCIGQAIP).

It belongs to the glycosyltransferase 83 family.

The protein localises to the cell inner membrane. It catalyses the reaction 4-amino-4-deoxy-alpha-L-arabinopyranosyl di-trans,octa-cis-undecaprenyl phosphate + lipid IVA = lipid IIA + di-trans,octa-cis-undecaprenyl phosphate.. It participates in lipopolysaccharide metabolism; 4-amino-4-deoxy-beta-L-arabinose-lipid A biosynthesis. Its function is as follows. Catalyzes the transfer of the L-Ara4N moiety of the glycolipid undecaprenyl phosphate-alpha-L-Ara4N to lipid A. The modified arabinose is attached to lipid A and is required for resistance to polymyxin and cationic antimicrobial peptides. The polypeptide is Undecaprenyl phosphate-alpha-4-amino-4-deoxy-L-arabinose arabinosyl transferase 2 (Proteus mirabilis (strain HI4320)).